Here is a 398-residue protein sequence, read N- to C-terminus: Acetate kinase (398 aa).

Asn-8 is a Mg(2+) binding site. Residue Lys-15 coordinates ATP. Position 89 (Arg-89) interacts with substrate. The active-site Proton donor/acceptor is Asp-146. Residues 206–210, 283–285, and 331–335 contribute to the ATP site; these read HIGNG, DMR, and GMGEN. Mg(2+) is bound at residue Glu-383.

It belongs to the acetokinase family. As to quaternary structure, homodimer. The cofactor is Mg(2+). Requires Mn(2+) as cofactor.

Its subcellular location is the cytoplasm. The catalysed reaction is acetate + ATP = acetyl phosphate + ADP. Its pathway is metabolic intermediate biosynthesis; acetyl-CoA biosynthesis; acetyl-CoA from acetate: step 1/2. Functionally, catalyzes the formation of acetyl phosphate from acetate and ATP. Can also catalyze the reverse reaction. The sequence is that of Acetate kinase from Streptococcus pyogenes serotype M2 (strain MGAS10270).